A 199-amino-acid chain; its full sequence is Elongation factor Ts (199 aa).

The tract at residues 81 to 84 (TDFV) is involved in Mg(2+) ion dislocation from EF-Tu.

This sequence belongs to the EF-Ts family.

It is found in the cytoplasm. Its function is as follows. Associates with the EF-Tu.GDP complex and induces the exchange of GDP to GTP. It remains bound to the aminoacyl-tRNA.EF-Tu.GTP complex up to the GTP hydrolysis stage on the ribosome. The chain is Elongation factor Ts from Thermotoga sp. (strain RQ2).